The following is a 417-amino-acid chain: Serine hydroxymethyltransferase 1 (417 aa).

Residues Leu121 and 125-127 (GHL) contribute to the (6S)-5,6,7,8-tetrahydrofolate site. An N6-(pyridoxal phosphate)lysine modification is found at Lys229. 354 to 356 (SPF) is a (6S)-5,6,7,8-tetrahydrofolate binding site.

It belongs to the SHMT family. Homodimer. Pyridoxal 5'-phosphate is required as a cofactor.

The protein localises to the cytoplasm. The catalysed reaction is (6R)-5,10-methylene-5,6,7,8-tetrahydrofolate + glycine + H2O = (6S)-5,6,7,8-tetrahydrofolate + L-serine. Its pathway is one-carbon metabolism; tetrahydrofolate interconversion. It participates in amino-acid biosynthesis; glycine biosynthesis; glycine from L-serine: step 1/1. In terms of biological role, catalyzes the reversible interconversion of serine and glycine with tetrahydrofolate (THF) serving as the one-carbon carrier. This reaction serves as the major source of one-carbon groups required for the biosynthesis of purines, thymidylate, methionine, and other important biomolecules. Also exhibits THF-independent aldolase activity toward beta-hydroxyamino acids, producing glycine and aldehydes, via a retro-aldol mechanism. This chain is Serine hydroxymethyltransferase 1, found in Pseudomonas syringae pv. syringae (strain B728a).